Here is a 569-residue protein sequence, read N- to C-terminus: MAYTLDRGSYAAMFGPTVGDRVRLADTELIIEVEQDYTTYGEEVKFGGGKVIRDGMGQSQHSRQEGAVDTVITNALIVDHWGIVKADVGIKDGRICAIGKAGNPDVQPNVDIIIGPGTEAIAGEGRILTAGGIDAHIHWICPQQIEDALHSGITTMLGGGTGPAEGTNATTCTPGPWHIARMLQAAEGLPMNMGFFGKGNASRPQGLEEQLRAGACGLKLHEDWGTTPSAIDVCLSVAEKWDVQVAIHTDTLNESGFVENTTAAFKGRTIHAFHTEGAGGGHAPDIIKLCGEANVLPSSTNPTRPFTRNTLDEHLDMLMVCHHLDSRIPEDVAFAESRIRRETIAAEDILHDLGAFSMIASDSQAMGRVGEVIIRTWQTADKMKRQRGALPEERGQNDNQRVKRYIAKYTINPAITHGIAHYVGSVAVGKLADLVLWKPMFFGVKPDLVLKCGTIASAAMGDPNASIPTPQPVHYRPMFGAFGGALTHSAVNFVSQAGLDGEIAQQFGLRKTLLPVVGCRTIGKADMVHNSATPHMEVDPETYEVRADGRLLTCEPATVLPLAQRYFLF.

The 439-residue stretch at 131 to 569 folds into the Urease domain; it reads GGIDAHIHWI…LPLAQRYFLF (439 aa). Ni(2+)-binding residues include histidine 136, histidine 138, and lysine 219. Lysine 219 is subject to N6-carboxylysine. Histidine 221 lines the substrate pocket. Ni(2+) contacts are provided by histidine 248 and histidine 274. The active-site Proton donor is the histidine 322. Aspartate 362 provides a ligand contact to Ni(2+).

This sequence belongs to the metallo-dependent hydrolases superfamily. Urease alpha subunit family. As to quaternary structure, heterotrimer of UreA (gamma), UreB (beta) and UreC (alpha) subunits. Three heterotrimers associate to form the active enzyme. Ni cation serves as cofactor. In terms of processing, carboxylation allows a single lysine to coordinate two nickel ions.

The protein localises to the cytoplasm. It catalyses the reaction urea + 2 H2O + H(+) = hydrogencarbonate + 2 NH4(+). Its pathway is nitrogen metabolism; urea degradation; CO(2) and NH(3) from urea (urease route): step 1/1. This is Urease subunit alpha from Magnetococcus marinus (strain ATCC BAA-1437 / JCM 17883 / MC-1).